We begin with the raw amino-acid sequence, 120 residues long: Ribosome-binding factor A (120 aa).

It belongs to the RbfA family. As to quaternary structure, monomer. Binds 30S ribosomal subunits, but not 50S ribosomal subunits or 70S ribosomes.

The protein resides in the cytoplasm. Its function is as follows. One of several proteins that assist in the late maturation steps of the functional core of the 30S ribosomal subunit. Associates with free 30S ribosomal subunits (but not with 30S subunits that are part of 70S ribosomes or polysomes). Required for efficient processing of 16S rRNA. May interact with the 5'-terminal helix region of 16S rRNA. The sequence is that of Ribosome-binding factor A from Verminephrobacter eiseniae (strain EF01-2).